The following is a 982-amino-acid chain: Polyribonucleotide nucleotidyltransferase 2, mitochondrial (982 aa).

Residues 1-39 constitute a mitochondrion transit peptide; the sequence is MSMAVASLRLLARGGRRRARFPAPLSVPGGRAAFLSGAA. Positions 624 to 678 constitute a KH domain; sequence PRLATLSFSSDSLRKLLFHRKKIEQETGARVSVSDGTVTIVAKTQPIMDKAIEKV. The S1 motif 1 domain maps to 689–757; the sequence is GRTYKGVVSS…LRGNIKLSLK (69 aa). Disordered stretches follow at residues 792–814 and 832–892; these read PSKD…EETP and QDVT…NDVL. Low complexity-rich tracts occupy residues 846 to 855 and 868 to 877; these read AKSSPKLSKP and KKTSGASTTA. In terms of domain architecture, S1 motif 2 spans 920-982; the sequence is GDVVTAKVYQ…KGIPVFSLLD (63 aa).

This sequence belongs to the polyribonucleotide nucleotidyltransferase family.

The protein resides in the mitochondrion. The catalysed reaction is RNA(n+1) + phosphate = RNA(n) + a ribonucleoside 5'-diphosphate. Involved in the 3'-end maturation of mitochondrial mRNAs, rRNAs and tRNAs. Functions as a poly(A) mRNA 3'-5' degrading phosphorylase. The protein is Polyribonucleotide nucleotidyltransferase 2, mitochondrial (PNP2) of Oryza sativa subsp. japonica (Rice).